Here is a 105-residue protein sequence, read N- to C-terminus: Small ribosomal subunit protein uS10 (105 aa).

This sequence belongs to the universal ribosomal protein uS10 family. Part of the 30S ribosomal subunit.

Its function is as follows. Involved in the binding of tRNA to the ribosomes. The polypeptide is Small ribosomal subunit protein uS10 (Rickettsia felis (strain ATCC VR-1525 / URRWXCal2) (Rickettsia azadi)).